The sequence spans 227 residues: ATP-dependent Clp protease proteolytic subunit (227 aa).

Ser-123 (nucleophile) is an active-site residue. His-148 is a catalytic residue.

This sequence belongs to the peptidase S14 family. In terms of assembly, fourteen ClpP subunits assemble into 2 heptameric rings which stack back to back to give a disk-like structure with a central cavity, resembling the structure of eukaryotic proteasomes.

The protein localises to the cytoplasm. It catalyses the reaction Hydrolysis of proteins to small peptides in the presence of ATP and magnesium. alpha-casein is the usual test substrate. In the absence of ATP, only oligopeptides shorter than five residues are hydrolyzed (such as succinyl-Leu-Tyr-|-NHMec, and Leu-Tyr-Leu-|-Tyr-Trp, in which cleavage of the -Tyr-|-Leu- and -Tyr-|-Trp bonds also occurs).. Cleaves peptides in various proteins in a process that requires ATP hydrolysis. Has a chymotrypsin-like activity. Plays a major role in the degradation of misfolded proteins. The protein is ATP-dependent Clp protease proteolytic subunit of Chlorobium phaeobacteroides (strain DSM 266 / SMG 266 / 2430).